Here is a 152-residue protein sequence, read N- to C-terminus: MMEFKDFSTGLYVAAKFSELTLDALEELQRSLRVPNPVPREKIHSTICYSRVNVPYVPSSGSFEVASSGHLEVWKTQDGSTLVLVLDSEYLRCRHMYARALGATHDFDDYTPHITLSYNVGPLSFSGDVQIPVVLDREYKEPLKLDWADDLK.

3',3'-cGAMP is bound at residue Tyr-12. Tyr-12 provides a ligand contact to 3',3'-cUAMP. Residues His-44, Thr-46, His-113, and Thr-115 contribute to the active site. The 3',3'-cGAMP site is built by Glu-141 and Trp-147. 2 residues coordinate 3',3'-cUAMP: Glu-141 and Trp-147.

The protein belongs to the anti-CBASS protein Acb1 family.

It catalyses the reaction 3',3'-cUAMP + H2O = U[3'-5']pAp[3'] + H(+). It carries out the reaction 3',3',3'-c-tri-AMP + H2O = A[3'-5']pA[3'-5']pAp[3'] + H(+). The enzyme catalyses 3',3',3'-cAAG + H2O = G[3'-5']pA[3'-5']pAp[3'] + H(+). The catalysed reaction is 3',3',3'-cAAG + H2O = A[3'-5']pG[3'-5']pAp[3'] + H(+). It catalyses the reaction 3',3'-cGAMP + H2O = G[3'-5']pAp[3'] + H(+). In terms of biological role, counteracts the host CBASS antiviral system. Phosphodiesterase that enables metal-independent hydrolysis of the host cyclic di- and trinucleotide CBASS signals such as 3'3'-cGAMP, 3'3'cUA, and 3'3'3'-cAAA. Does not cleave cGG or cA4. Besides evasion of the CBASS system, might also enable evasion of the type III CRISPR systems that use cA3 signals. The sequence is that of Anti-CBASS protein Acb1 (57B) from Escherichia coli (Bacteriophage T4).